The chain runs to 81 residues: Putative membrane protein insertion efficiency factor (81 aa).

This sequence belongs to the UPF0161 family.

It localises to the cell inner membrane. Functionally, could be involved in insertion of integral membrane proteins into the membrane. The sequence is that of Putative membrane protein insertion efficiency factor from Pseudomonas syringae pv. tomato (strain ATCC BAA-871 / DC3000).